A 447-amino-acid chain; its full sequence is Probable glycine dehydrogenase (decarboxylating) subunit 1 (447 aa).

Belongs to the GcvP family. N-terminal subunit subfamily. In terms of assembly, the glycine cleavage system is composed of four proteins: P, T, L and H. In this organism, the P 'protein' is a heterodimer of two subunits.

It catalyses the reaction N(6)-[(R)-lipoyl]-L-lysyl-[glycine-cleavage complex H protein] + glycine + H(+) = N(6)-[(R)-S(8)-aminomethyldihydrolipoyl]-L-lysyl-[glycine-cleavage complex H protein] + CO2. Functionally, the glycine cleavage system catalyzes the degradation of glycine. The P protein binds the alpha-amino group of glycine through its pyridoxal phosphate cofactor; CO(2) is released and the remaining methylamine moiety is then transferred to the lipoamide cofactor of the H protein. The protein is Probable glycine dehydrogenase (decarboxylating) subunit 1 of Beijerinckia indica subsp. indica (strain ATCC 9039 / DSM 1715 / NCIMB 8712).